The chain runs to 109 residues: Flagellar hook-basal body complex protein FliE (109 aa).

A disordered region spans residues methionine 1 to glycine 38. A compositionally biased stretch (basic and acidic residues) spans threonine 19–glycine 38.

The protein belongs to the FliE family.

It is found in the bacterial flagellum basal body. The sequence is that of Flagellar hook-basal body complex protein FliE from Helicobacter pylori (strain G27).